A 72-amino-acid polypeptide reads, in one-letter code: Translation initiation factor IF-1 (72 aa).

In terms of domain architecture, S1-like spans 1–72 (MSKEDVIEVE…TRGRITWRKK (72 aa)).

The protein belongs to the IF-1 family. Component of the 30S ribosomal translation pre-initiation complex which assembles on the 30S ribosome in the order IF-2 and IF-3, IF-1 and N-formylmethionyl-tRNA(fMet); mRNA recruitment can occur at any time during PIC assembly.

The protein localises to the cytoplasm. In terms of biological role, one of the essential components for the initiation of protein synthesis. Stabilizes the binding of IF-2 and IF-3 on the 30S subunit to which N-formylmethionyl-tRNA(fMet) subsequently binds. Helps modulate mRNA selection, yielding the 30S pre-initiation complex (PIC). Upon addition of the 50S ribosomal subunit IF-1, IF-2 and IF-3 are released leaving the mature 70S translation initiation complex. The sequence is that of Translation initiation factor IF-1 from Alkaliphilus metalliredigens (strain QYMF).